Here is a 261-residue protein sequence, read N- to C-terminus: MELLQVTILFLLPSICSSNSTGVLEAANNSLVVTTTKPSITTPNTESLQKNVVTPTTGTTPKGTITNELLKMSLMSTATFLTSKDEGLKATTTDVRKNDSIISNVTVTSVTLPNAVSTLQSSKPKTETQSSIKTTEIPGSVLQPDASPSKTGTLTSIPVTIPENTSQSQVIGTEGGKNASTSATSRSYSSIILPVVIALIVITLSVFVLVGLYRMCWKADPGTPENGNDQPQSDKESVKLLTVKTISHESGEHSAQGKTKN.

Positions 1–18 (MELLQVTILFLLPSICSS) are cleaved as a signal peptide. N19, N28, N98, and N104 each carry an N-linked (GlcNAc...) asparagine glycan. The Extracellular portion of the chain corresponds to 19 to 190 (NSTGVLEAAN…TSATSRSYSS (172 aa)). 2 stretches are compositionally biased toward polar residues: residues 118-134 (TLQS…SIKT) and 146-171 (ASPS…SQVI). Residues 118–183 (TLQSSKPKTE…EGGKNASTSA (66 aa)) are disordered. 2 N-linked (GlcNAc...) asparagine glycosylation sites follow: N164 and N178. The chain crosses the membrane as a helical span at residues 191 to 211 (IILPVVIALIVITLSVFVLVG). Residues 212–261 (LYRMCWKADPGTPENGNDQPQSDKESVKLLTVKTISHESGEHSAQGKTKN) are Cytoplasmic-facing. Residue S237 is modified to Phosphoserine.

In terms of processing, highly O-glycosylated. Sialic acid-rich glycoprotein. Expressed in heart, kidney and lung.

The protein resides in the cell membrane. The protein localises to the membrane. It is found in the secreted. Endothelial sialomucin, also called endomucin or mucin-like sialoglycoprotein, which interferes with the assembly of focal adhesion complexes and inhibits interaction between cells and the extracellular matrix. The chain is Endomucin (EMCN) from Homo sapiens (Human).